The primary structure comprises 517 residues: 2-isopropylmalate synthase (517 aa).

The Pyruvate carboxyltransferase domain occupies Val-7 to Val-269. Mn(2+)-binding residues include Asp-16, His-204, His-206, and Asn-240. The segment at Leu-366–Ile-517 is required for the condensation reaction. Not required to bind substrate. Residues Lys-395–Ile-517 form a regulatory domain region.

It belongs to the alpha-IPM synthase/homocitrate synthase family. LeuA type 1 subfamily. In terms of assembly, homodimer. Remains a homodimer in the presence of L-leucine. It depends on Mn(2+) as a cofactor.

It localises to the cytoplasm. It catalyses the reaction 3-methyl-2-oxobutanoate + acetyl-CoA + H2O = (2S)-2-isopropylmalate + CoA + H(+). It participates in amino-acid biosynthesis; L-leucine biosynthesis; L-leucine from 3-methyl-2-oxobutanoate: step 1/4. With respect to regulation, inhibited by 3-bromo substituents and Leu, the pathway end product. In terms of biological role, catalyzes the condensation of the acetyl group of acetyl-CoA with 3-methyl-2-oxobutanoate (2-ketoisovalerate) to form 3-carboxy-3-hydroxy-4-methylpentanoate (2-isopropylmalate). Complements an E.coli deletion. The chain is 2-isopropylmalate synthase from Neisseria meningitidis serogroup B (strain ATCC BAA-335 / MC58).